We begin with the raw amino-acid sequence, 362 residues long: tRNA/tmRNA (uracil-C(5))-methyltransferase (362 aa).

Residues Q182, Y210, N215, E231, and D293 each coordinate S-adenosyl-L-methionine. Catalysis depends on C318, which acts as the Nucleophile. Residue E352 is the Proton acceptor of the active site.

It belongs to the class I-like SAM-binding methyltransferase superfamily. RNA M5U methyltransferase family. TrmA subfamily.

It catalyses the reaction uridine(54) in tRNA + S-adenosyl-L-methionine = 5-methyluridine(54) in tRNA + S-adenosyl-L-homocysteine + H(+). It carries out the reaction uridine(341) in tmRNA + S-adenosyl-L-methionine = 5-methyluridine(341) in tmRNA + S-adenosyl-L-homocysteine + H(+). Functionally, dual-specificity methyltransferase that catalyzes the formation of 5-methyluridine at position 54 (m5U54) in all tRNAs, and that of position 341 (m5U341) in tmRNA (transfer-mRNA). This Neisseria meningitidis serogroup A / serotype 4A (strain DSM 15465 / Z2491) protein is tRNA/tmRNA (uracil-C(5))-methyltransferase.